The sequence spans 816 residues: MLRPQGLLWLPLLFTSVCVMLNSNVLLWITALAIKFTLIDSQAQYPVVNTNYGKIQGLRTPLPSEILGPVEQYLGVPYASPPTGERRFQPPESPSSWTGIRNATQFSAVCPQHLDERFLLHDMLPIWFTTSLDTLMTYVQDQNEDCLYLNIYVPMEDDIHEQNSKKPVMVYIHGGSYMEGTGNMIDGSILASYGNVIVITINYRLGILGFLSTGDQAAKGNYGLLDQIQALRWIEENVGAFGGDPKRVTIFGSGAGASCVSLLTLSHYSEGLFQKAIIQSGTALSSWAVNYQPAKYTRILADKVGCNMLDTTDMVECLKNKNYKELIQQTITPATYHIAFGPVIDGDVIPDDPQILMEQGEFLNYDIMLGVNQGEGLKFVDGIVDNEDGVTPNDFDFSVSNFVDNLYGYPEGKDTLRETIKFMYTDWADKENPETRRKTLVALFTDHQWVAPAVATADLHAQYGSPTYFYAFYHHCQSEMKPSWADSAHGDEVPYVFGIPMIGPTELFSCNFSKNDVMLSAVVMTYWTNFAKTGDPNQPVPQDTKFIHTKPNRFEEVAWSKYNPKDQLYLHIGLKPRVRDHYRATKVAFWLELVPHLHNLNEIFQYVSTTTKVPPPDMTSFPYGTRRSPAKIWPTTKRPAITPANNPKHSKDPHKTGPEDTTVLIETKRDYSTELSVTIAVGASLLFLNILAFAALYYKKDKRRHETHRHPSPQRNTTNDITHIQNEEIMSLQMKQLEHDHECESLQAHDTLRLTCPPDYTLTLRRSPDDIPFMTPNTITMIPNTLMGMQPLHTFKTFSGGQNSTNLPHGHSTTRV.

The N-terminal stretch at 1 to 43 (MLRPQGLLWLPLLFTSVCVMLNSNVLLWITALAIKFTLIDSQA) is a signal peptide. The Extracellular portion of the chain corresponds to 44–676 (QYPVVNTNYG…TKRDYSTELS (633 aa)). An N-linked (GlcNAc...) asparagine glycan is attached at Asn-102. Cystine bridges form between Cys-110–Cys-146 and Cys-306–Cys-317. The segment at 359-364 (QGEFLN) is interaction with NRXN1. Residues Cys-476 and Cys-510 are joined by a disulfide bond. Residue Asn-511 is glycosylated (N-linked (GlcNAc...) asparagine). The tract at residues 636-659 (TKRPAITPANNPKHSKDPHKTGPE) is disordered. The segment covering 649–658 (HSKDPHKTGP) has biased composition (basic and acidic residues). Residues 677–697 (VTIAVGASLLFLNILAFAALY) form a helical membrane-spanning segment. Topologically, residues 698–816 (YKKDKRRHET…LPHGHSTTRV (119 aa)) are cytoplasmic. Ser-712 bears the Phosphoserine mark.

Belongs to the type-B carboxylesterase/lipase family. As to quaternary structure, homodimer. Interacts with NRXN1 in a calcium-dependent manner. Interaction with neurexins is mediated by heparan sulfate glycan modification on neurexin. Interacts through its C-terminus with DLG4/PSD-95 third PDZ domain. Expressed in fetal and adult brain, prostate and testis.

It is found in the cell membrane. It localises to the postsynaptic density membrane. In terms of biological role, cell surface protein involved in cell-cell-interactions via its interactions with neurexin family members. In Homo sapiens (Human), this protein is Neuroligin-4, Y-linked (NLGN4Y).